Here is a 224-residue protein sequence, read N- to C-terminus: Ribonuclease HII (224 aa).

The region spanning 1-210 (MKLGGIDEAG…LKKIEEKLQK (210 aa)) is the RNase H type-2 domain. Positions 7, 8, and 105 each coordinate a divalent metal cation.

It belongs to the RNase HII family. Requires Mn(2+) as cofactor. It depends on Mg(2+) as a cofactor.

Its subcellular location is the cytoplasm. It catalyses the reaction Endonucleolytic cleavage to 5'-phosphomonoester.. In terms of biological role, endonuclease that specifically degrades the RNA of RNA-DNA hybrids. The polypeptide is Ribonuclease HII (Thermococcus sibiricus (strain DSM 12597 / MM 739)).